The chain runs to 214 residues: Probable nicotinate-nucleotide adenylyltransferase (214 aa).

Belongs to the NadD family.

The enzyme catalyses nicotinate beta-D-ribonucleotide + ATP + H(+) = deamido-NAD(+) + diphosphate. It functions in the pathway cofactor biosynthesis; NAD(+) biosynthesis; deamido-NAD(+) from nicotinate D-ribonucleotide: step 1/1. Catalyzes the reversible adenylation of nicotinate mononucleotide (NaMN) to nicotinic acid adenine dinucleotide (NaAD). In Aeromonas hydrophila subsp. hydrophila (strain ATCC 7966 / DSM 30187 / BCRC 13018 / CCUG 14551 / JCM 1027 / KCTC 2358 / NCIMB 9240 / NCTC 8049), this protein is Probable nicotinate-nucleotide adenylyltransferase.